The chain runs to 531 residues: Glucose-6-phosphate exchanger SLC37A1 (531 aa).

A helical transmembrane segment spans residues 18 to 38; that stretch reads QWYRAFIFMLTFLLYASFHLS. The interval 53–72 is disordered; the sequence is CTAGDGPESPFSDPSSSTRH. The next 11 helical transmembrane spans lie at 100–120, 129–149, 157–177, 192–214, 222–242, 332–352, 364–384, 392–412, 419–439, 464–484, and 488–508; these read GALDYAFLCAYAIGMYLSGII, YLTFGMLASGAFTALFGLGYF, FYVVTQIINGLVQTTGWPSVV, IMGIWNSHTSVGNILGSLIAGYW, SFIVPGAIVAAMGIVCFLFLI, LCLLFAKLVSYTFLFWLPLYI, GELSTLFDVGGIFGGILAGVI, ASTCGLMLLLAAPTLYVFSSV, ATIAMLLLSGALVSGPYALIT, AIIDGTGSVGAALGPLLAGLI, and GWSNVFYMLMFADACALLFLV.

The protein belongs to the major facilitator superfamily. Organophosphate:Pi antiporter (OPA) (TC 2.A.1.4) family.

The protein resides in the endoplasmic reticulum membrane. The catalysed reaction is D-glucose 6-phosphate(in) + phosphate(out) = D-glucose 6-phosphate(out) + phosphate(in). Inhibited by vanadate but not by chlorogenic acid. Inorganic phosphate and glucose-6-phosphate antiporter. May transport cytoplasmic glucose-6-phosphate into the lumen of the endoplasmic reticulum and translocate inorganic phosphate into the opposite direction. Independent of a lumenal glucose-6-phosphatase. May not play a role in homeostatic regulation of blood glucose levels. The sequence is that of Glucose-6-phosphate exchanger SLC37A1 from Mus musculus (Mouse).